We begin with the raw amino-acid sequence, 247 residues long: ATP synthase subunit a, chloroplastic (247 aa).

5 helical membrane-spanning segments follow: residues 38-58, 95-115, 134-154, 199-219, and 220-240; these read QVLITSWVVIAILLGSATIAV, VPFIGTMFLFIFVSNWSGALL, INTTVALALLTSVAYFYAGLT, LVVVVLVSLVPLVVPIPVMLL, and GLFTSGIQALIFATLAAAYIG.

The protein belongs to the ATPase A chain family. F-type ATPases have 2 components, CF(1) - the catalytic core - and CF(0) - the membrane proton channel. CF(1) has five subunits: alpha(3), beta(3), gamma(1), delta(1), epsilon(1). CF(0) has four main subunits: a, b, b' and c.

It localises to the plastid. Its subcellular location is the chloroplast thylakoid membrane. Its function is as follows. Key component of the proton channel; it plays a direct role in the translocation of protons across the membrane. The protein is ATP synthase subunit a, chloroplastic of Nicotiana sylvestris (Wood tobacco).